We begin with the raw amino-acid sequence, 353 residues long: Protein RecA (353 aa).

68 to 75 (GPESSGKT) provides a ligand contact to ATP.

It belongs to the RecA family.

It is found in the cytoplasm. Functionally, can catalyze the hydrolysis of ATP in the presence of single-stranded DNA, the ATP-dependent uptake of single-stranded DNA by duplex DNA, and the ATP-dependent hybridization of homologous single-stranded DNAs. It interacts with LexA causing its activation and leading to its autocatalytic cleavage. The protein is Protein RecA of Roseiflexus castenholzii (strain DSM 13941 / HLO8).